The following is a 150-amino-acid chain: PTS system galactitol-specific EIIA component (150 aa).

The PTS EIIA type-2 domain maps to 1–144 (MTNLFVRSGI…TQLKEYFTKY (144 aa)). H62 (tele-phosphohistidine intermediate) is an active-site residue. Position 62 is a phosphohistidine; by HPr (H62).

In terms of assembly, forms a complex with one each of subunit of GatA, GatB and 2 subunits of GatC.

The protein localises to the cytoplasm. The phosphoenolpyruvate-dependent sugar phosphotransferase system (sugar PTS), a major carbohydrate active transport system, catalyzes the phosphorylation of incoming sugar substrates concomitantly with their translocation across the cell membrane. The enzyme II complex composed of GatA, GatB and GatC is involved in galactitol transport. This Escherichia coli O157:H7 protein is PTS system galactitol-specific EIIA component (gatA).